The following is a 549-amino-acid chain: Probable protein kinase UbiB (549 aa).

The 379-residue stretch at 123 to 501 (DFNETPLASA…QQQAHKSNYL (379 aa)) folds into the Protein kinase domain. ATP is bound by residues 129 to 137 (LASASISQV) and Lys-152. Asp-287 acts as the Proton acceptor in catalysis. 2 helical membrane-spanning segments follow: residues 498 to 518 (SNYLLITSAILLICGTLLFNQ) and 520 to 540 (ATLLSPYVCLISGAVLWIIGW).

It belongs to the ABC1 family. UbiB subfamily.

It localises to the cell inner membrane. Its pathway is cofactor biosynthesis; ubiquinone biosynthesis [regulation]. In terms of biological role, is probably a protein kinase regulator of UbiI activity which is involved in aerobic coenzyme Q (ubiquinone) biosynthesis. This chain is Probable protein kinase UbiB, found in Shewanella oneidensis (strain ATCC 700550 / JCM 31522 / CIP 106686 / LMG 19005 / NCIMB 14063 / MR-1).